Reading from the N-terminus, the 195-residue chain is Oocyte-secreted protein 3 (195 aa).

An N-terminal signal peptide occupies residues 1 to 21 (MKAFVASGLLLLIFGMWRCSG). An N-linked (GlcNAc...) asparagine glycan is attached at Asn102.

Belongs to the PLAC1 family. Oocyte-specific.

It is found in the secreted. This Mus musculus (Mouse) protein is Oocyte-secreted protein 3.